The sequence spans 466 residues: Alpha-1A adrenergic receptor (466 aa).

The Extracellular segment spans residues 1-27 (MVFLSGNASDSSNCTHPPPPVNISKAI). N-linked (GlcNAc...) asparagine glycosylation is found at Asn7, Asn13, and Asn22. A helical membrane pass occupies residues 28-51 (LLGVILGGLILFGVLGNILVILSV). Residues 52–64 (ACHRHLHSVTHYY) lie on the Cytoplasmic side of the membrane. The chain crosses the membrane as a helical span at residues 65 to 88 (IVNLAVADLLLTSTVLPFSAIFEI). At 89-99 (LGYWAFGRVFC) the chain is on the extracellular side. A disulfide bond links Cys99 and Cys176. Residues 100-122 (NVWAAVDVLCCTASIMGLCIISI) form a helical membrane-spanning segment. The Cytoplasmic segment spans residues 123–143 (DRYIGVSYPLRYPTIVTQKRG). A helical transmembrane segment spans residues 144–167 (LMALLCVWALSLVISIGPLFGWRQ). Over 168–181 (PAPEDETICQINEE) the chain is Extracellular. A helical transmembrane segment spans residues 182–205 (PGYVLFSALGSFYVPLTIILVMYC). The Cytoplasmic portion of the chain corresponds to 206–273 (RVYVVAKRES…FSREKKAAKT (68 aa)). At Ser215 the chain carries Phosphoserine; by PKA. A helical transmembrane segment spans residues 274-297 (LGIVVGCFVLCWLPFFLVMPIGSF). Residues 298-305 (FPDFRPSE) lie on the Extracellular side of the membrane. A helical transmembrane segment spans residues 306-329 (TVFKIAFWLGYLNSCINPIIYPCS). The Cytoplasmic segment spans residues 330-466 (SQEFKKAFQN…ISLSENGEEV (137 aa)). The Nuclear localization signal signature appears at 334–349 (KKAFQNVLRIQCLRRK). The S-palmitoyl cysteine moiety is linked to residue Cys345.

The protein belongs to the G-protein coupled receptor 1 family. Adrenergic receptor subfamily. ADRA1A sub-subfamily. Homo- and heterooligomer. Heterooligomerizes with ADRA1B homooligomers in cardiac myocytes. Interacts with CAVIN4.

It localises to the nucleus membrane. The protein localises to the cell membrane. Its subcellular location is the cytoplasm. The protein resides in the membrane. It is found in the caveola. This alpha-adrenergic receptor mediates its action by association with G proteins that activate a phosphatidylinositol-calcium second messenger system. Its effect is mediated by G(q) and G(11) proteins. Nuclear ADRA1A-ADRA1B heterooligomers regulate phenylephrine (PE)-stimulated ERK signaling in cardiac myocytes. This chain is Alpha-1A adrenergic receptor (ADRA1A), found in Bos taurus (Bovine).